The following is a 75-amino-acid chain: Exodeoxyribonuclease 7 small subunit (75 aa).

It belongs to the XseB family. Heterooligomer composed of large and small subunits.

The protein resides in the cytoplasm. It catalyses the reaction Exonucleolytic cleavage in either 5'- to 3'- or 3'- to 5'-direction to yield nucleoside 5'-phosphates.. In terms of biological role, bidirectionally degrades single-stranded DNA into large acid-insoluble oligonucleotides, which are then degraded further into small acid-soluble oligonucleotides. The protein is Exodeoxyribonuclease 7 small subunit of Listeria monocytogenes serotype 4b (strain CLIP80459).